The sequence spans 425 residues: Monoacylglycerol lipase ABHD2 (425 aa).

At 1–9 (MNAMLETPE) the chain is on the cytoplasmic side. Residues 10–30 (LPAVFDGVKLAAVAAVLYVIV) traverse the membrane as a helical; Signal-anchor for type II membrane protein segment. Topologically, residues 31–425 (RCLNLKSPTA…DTEQVEADLE (395 aa)) are extracellular. The 255-residue stretch at 128 to 382 (MVICPGIANH…HGGHLGFFEG (255 aa)) folds into the AB hydrolase-1 domain. Residue Asn136 is glycosylated (N-linked (GlcNAc...) asparagine). Ser207 acts as the Nucleophile in catalysis. Catalysis depends on charge relay system residues Asp345 and His376.

It belongs to the AB hydrolase superfamily. AB hydrolase 4 family. In terms of tissue distribution, present in sperm (at protein level).

It is found in the cell projection. The protein localises to the cilium. It localises to the flagellum membrane. Its subcellular location is the cell membrane. It carries out the reaction an acetyl ester + H2O = an aliphatic alcohol + acetate + H(+). The enzyme catalyses Hydrolyzes glycerol monoesters of long-chain fatty acids.. The catalysed reaction is a triacylglycerol + H2O = a diacylglycerol + a fatty acid + H(+). It catalyses the reaction 2-(5Z,8Z,11Z,14Z-eicosatetraenoyl)-glycerol + H2O = glycerol + (5Z,8Z,11Z,14Z)-eicosatetraenoate + H(+). It carries out the reaction a butanoate ester + H2O = an aliphatic alcohol + butanoate + H(+). The enzyme catalyses hexadecanoate ester + H2O = an aliphatic alcohol + hexadecanoate + H(+). With respect to regulation, acylglycerol lipase activity is activated upon binding to progesterone. Progesterone-dependent acylglycerol lipase that catalyzes hydrolysis of endocannabinoid arachidonoylglycerol (AG) from cell membrane. Acts as a progesterone receptor: progesterone-binding activates the acylglycerol lipase activity, mediating degradation of 1-arachidonoylglycerol (1AG) and 2-arachidonoylglycerol (2AG) to glycerol and arachidonic acid (AA). Also displays an ester hydrolase activity against acetyl ester, butanoate ester and hexadecanoate ester. Plays a key role in sperm capacitation in response to progesterone by mediating degradation of 2AG, an inhibitor of the sperm calcium channel CatSper, leading to calcium influx via CatSper and sperm activation. May also play a role in smooth muscle cells migration. This chain is Monoacylglycerol lipase ABHD2, found in Homo sapiens (Human).